A 124-amino-acid polypeptide reads, in one-letter code: Small ribosomal subunit protein uS12 (124 aa).

Position 89 is a 3-methylthioaspartic acid (aspartate 89).

Belongs to the universal ribosomal protein uS12 family. As to quaternary structure, part of the 30S ribosomal subunit. Contacts proteins S8 and S17. May interact with IF1 in the 30S initiation complex.

Functionally, with S4 and S5 plays an important role in translational accuracy. Its function is as follows. Interacts with and stabilizes bases of the 16S rRNA that are involved in tRNA selection in the A site and with the mRNA backbone. Located at the interface of the 30S and 50S subunits, it traverses the body of the 30S subunit contacting proteins on the other side and probably holding the rRNA structure together. The combined cluster of proteins S8, S12 and S17 appears to hold together the shoulder and platform of the 30S subunit. This Erwinia amylovora (Fire blight bacteria) protein is Small ribosomal subunit protein uS12.